Consider the following 227-residue polypeptide: NAD(P)H-quinone oxidoreductase subunit K, chloroplastic (227 aa).

[4Fe-4S] cluster-binding residues include Cys43, Cys44, Cys108, and Cys139. A compositionally biased stretch (polar residues) spans 173–192 (RSFTTNHKFQVGRSSHTGNY). Positions 173–201 (RSFTTNHKFQVGRSSHTGNYDQGFLSKPP) are disordered.

This sequence belongs to the complex I 20 kDa subunit family. NDH is composed of at least 16 different subunits, 5 of which are encoded in the nucleus. [4Fe-4S] cluster serves as cofactor.

Its subcellular location is the plastid. The protein localises to the chloroplast thylakoid membrane. It catalyses the reaction a plastoquinone + NADH + (n+1) H(+)(in) = a plastoquinol + NAD(+) + n H(+)(out). It carries out the reaction a plastoquinone + NADPH + (n+1) H(+)(in) = a plastoquinol + NADP(+) + n H(+)(out). NDH shuttles electrons from NAD(P)H:plastoquinone, via FMN and iron-sulfur (Fe-S) centers, to quinones in the photosynthetic chain and possibly in a chloroplast respiratory chain. The immediate electron acceptor for the enzyme in this species is believed to be plastoquinone. Couples the redox reaction to proton translocation, and thus conserves the redox energy in a proton gradient. This Trachelium caeruleum (Blue throatwort) protein is NAD(P)H-quinone oxidoreductase subunit K, chloroplastic.